The sequence spans 599 residues: Elongation factor 4 (599 aa).

One can recognise a tr-type G domain in the interval 5–187 (AHIRNFSIVA…AIVKHLPAPK (183 aa)). Residues 17–22 (DHGKST) and 134–137 (NKID) each bind GTP.

It belongs to the TRAFAC class translation factor GTPase superfamily. Classic translation factor GTPase family. LepA subfamily.

Its subcellular location is the cell inner membrane. It catalyses the reaction GTP + H2O = GDP + phosphate + H(+). Its function is as follows. Required for accurate and efficient protein synthesis under certain stress conditions. May act as a fidelity factor of the translation reaction, by catalyzing a one-codon backward translocation of tRNAs on improperly translocated ribosomes. Back-translocation proceeds from a post-translocation (POST) complex to a pre-translocation (PRE) complex, thus giving elongation factor G a second chance to translocate the tRNAs correctly. Binds to ribosomes in a GTP-dependent manner. The polypeptide is Elongation factor 4 (Ruegeria pomeroyi (strain ATCC 700808 / DSM 15171 / DSS-3) (Silicibacter pomeroyi)).